The following is a 554-amino-acid chain: Solute carrier family 22 member 1 (554 aa).

The Cytoplasmic segment spans residues 1 to 21; that stretch reads MPTVDDILEQVGESGWFQKQA. Residues 22–42 form a helical membrane-spanning segment; sequence FLILCLLSAAFAPICVGIVFL. The Extracellular segment spans residues 43–149; sequence GFTPDHHCQS…LVCADSWKLD (107 aa). An N-linked (GlcNAc...) asparagine glycan is attached at N71. Residues 150–170 form a helical membrane-spanning segment; that stretch reads LFQSCLNAGFLFGSLGVGYFA. Topologically, residues 171–176 are cytoplasmic; the sequence is DRFGRK. A helical transmembrane segment spans residues 177 to 197; that stretch reads LCLLGTVLVNAVSGVLMAFSP. Topologically, residues 198–206 are extracellular; that stretch reads NYMSMLLFR. A helical membrane pass occupies residues 207 to 229; the sequence is LLQGLVSKGNWMAGYTLITEFVG. At 230-235 the chain is on the cytoplasmic side; that stretch reads SGSRRT. Residues 236–256 form a helical membrane-spanning segment; sequence VAIMYQMAFTVGLVALTGLAY. At 257–262 the chain is on the extracellular side; the sequence is ALPHWR. The helical transmembrane segment at 263–283 threads the bilayer; it reads WLQLAVSLPTFLFLLYYWCVP. Residues 283 to 287 carry the Proline-rich sequence motif; that stretch reads PESPR. Residues 284 to 347 are Cytoplasmic-facing; it reads ESPRWLLSQK…FRTPRLRKRT (64 aa). S333 is subject to Phosphoserine. A helical membrane pass occupies residues 348 to 368; that stretch reads FILMYLWFTDSVLYQGLILHM. The Extracellular segment spans residues 369 to 376; that stretch reads GATSGNLY. Residues 377-397 form a helical membrane-spanning segment; the sequence is LDFLYSALVEIPGAFIALITI. The Cytoplasmic portion of the chain corresponds to 398–402; it reads DRVGR. A helical transmembrane segment spans residues 403–423; that stretch reads IYPMAMSNLLAGAACLVMIFI. Residues 424 to 431 are Extracellular-facing; it reads SPDLHWLN. Residues 432 to 452 traverse the membrane as a helical segment; sequence IIIMCVGRMGITIAIQMICLV. Over 453-464 the chain is Cytoplasmic; it reads NAELYPTFVRNL. The chain crosses the membrane as a helical span at residues 465-485; the sequence is GVMVCSSLCDIGGIITPFIVF. Residues 486–492 lie on the Extracellular side of the membrane; it reads RLREVWQ. A helical membrane pass occupies residues 493 to 513; the sequence is ALPLILFAVLGLLAAGVTLLL. The Cytoplasmic portion of the chain corresponds to 514-554; it reads PETKGVALPETMKDAENLGRKAKPKENTIYLKVQTSEPSGT. T541 carries the phosphothreonine modification.

It belongs to the major facilitator (TC 2.A.1) superfamily. Organic cation transporter (TC 2.A.1.19) family. Phosphorylated. Widely expressed with high level in liver. In liver, expressed around the central vein. Expressed in kidney. Expressed in small intestine enterocytes. Localized to peritubular myoid cells, Leydig cells and moderately to the basal membrane of Sertoli cells in testes. Expressed in tracheal and bronchial ciliated epithelium in the respiratory tract. Also expressed in skeletal muscle, stomach, spleen, heart, placentacolon, brain, granulycytes and lympohocytes. In terms of tissue distribution, expressed in liver and in glial cell lines. As to expression, expressed in glial cell lines. Not expressed in liver.

The protein resides in the basolateral cell membrane. Its subcellular location is the apical cell membrane. The protein localises to the lateral cell membrane. It is found in the basal cell membrane. It localises to the cell membrane. The catalysed reaction is 1-methylnicotinamide(out) = 1-methylnicotinamide(in). The enzyme catalyses dopamine(out) = dopamine(in). It catalyses the reaction serotonin(out) = serotonin(in). It carries out the reaction (R)-adrenaline(out) = (R)-adrenaline(in). The catalysed reaction is histamine(out) = histamine(in). The enzyme catalyses guanidine(out) = guanidine(in). It catalyses the reaction acetylcholine(in) = acetylcholine(out). It carries out the reaction thiamine(in) = thiamine(out). The catalysed reaction is agmatine(out) = agmatine(in). The enzyme catalyses putrescine(out) = putrescine(in). It catalyses the reaction spermidine(in) = spermidine(out). It carries out the reaction L-histidyl-L-proline diketopiperazine(in) = L-histidyl-L-proline diketopiperazine(out). The catalysed reaction is (R)-salsolinol(in) = (R)-salsolinol(out). The enzyme catalyses prostaglandin F2alpha(out) = prostaglandin F2alpha(in). It catalyses the reaction prostaglandin E2(out) = prostaglandin E2(in). With respect to regulation, phosphorylation of the transporter leads to changes in its substrate affinity, resulting in a regulation of the transport activity. In contrast with rat ortholog, ASP uptake is inhibited by protein kinase A (PKA) and C (PKC) activation. ASP uptake is also endogenously activated by calmodulin, the calmodulin-dependent kinase II and LCK tyrosine kinase. Inhibited by cGMP, most likely through a cGMP-binding protein that interacts with OCT1. Its function is as follows. Electrogenic voltage-dependent transporter that mediates the transport of a variety of organic cations such as endogenous bioactive amines, cationic drugs and xenobiotics. Functions as a pH- and Na(+)-independent, bidirectional transporter. Cation cellular uptake or release is driven by the electrochemical potential (i.e. membrane potential and concentration gradient) and substrate selectivity. Hydrophobicity is a major requirement for recognition in polyvalent substrates and inhibitors. Primarily expressed at the basolateral membrane of hepatocytes and proximal tubules and involved in the uptake and disposition of cationic compounds by hepatic and renal clearance from the blood flow. Most likely functions as an uptake carrier in enterocytes contributing to the intestinal elimination of organic cations from the systemic circulation. Transports endogenous monoamines such as N-1-methylnicotinamide (NMN), guanidine, histamine, neurotransmitters dopamine, serotonin and adrenaline. Also transports natural polyamines such as spermidine, agmatine and putrescine at low affinity, but relatively high turnover. Involved in the hepatic uptake of vitamin B1/thiamine, hence regulating hepatic lipid and energy metabolism. Mediates the bidirectional transport of acetylcholine (ACh) at the apical membrane of ciliated cell in airway epithelium, thereby playing a role in luminal release of ACh from bronchial epithelium. Transports dopaminergic neuromodulators cyclo(his-pro) and salsolinol with lower efficency. Also capable of transporting non-amine endogenous compounds such as prostaglandin E2 (PGE2) and prostaglandin F2-alpha (PGF2-alpha). May contribute to the transport of cationic compounds in testes across the blood-testis-barrier. Also involved in the uptake of xenobiotics tributylmethylammonium (TBuMA), quinidine, N-methyl-quinine (NMQ), N-methyl-quinidine (NMQD) N-(4,4-azo-n-pentyl)-quinuclidine (APQ), azidoprocainamide methoiodide (AMP), N-(4,4-azo-n-pentyl)-21-deoxyajmalinium (APDA) and 4-(4-(dimethylamino)styryl)-N-methylpyridinium (ASP). Functionally, mediates the uptake of 1-methyl-4-phenylpyridinium (MPP(+)). Not able to uptake 1-methyl-4-phenylpyridinium (MPP(+)). This Homo sapiens (Human) protein is Solute carrier family 22 member 1.